The following is a 354-amino-acid chain: Histidinol-phosphate aminotransferase (354 aa).

K210 is subject to N6-(pyridoxal phosphate)lysine.

It belongs to the class-II pyridoxal-phosphate-dependent aminotransferase family. Histidinol-phosphate aminotransferase subfamily. In terms of assembly, homodimer. It depends on pyridoxal 5'-phosphate as a cofactor.

It catalyses the reaction L-histidinol phosphate + 2-oxoglutarate = 3-(imidazol-4-yl)-2-oxopropyl phosphate + L-glutamate. It participates in amino-acid biosynthesis; L-histidine biosynthesis; L-histidine from 5-phospho-alpha-D-ribose 1-diphosphate: step 7/9. This chain is Histidinol-phosphate aminotransferase, found in Clostridium botulinum (strain Kyoto / Type A2).